A 731-amino-acid chain; its full sequence is E3 ubiquitin-protein ligase SMURF1 (731 aa).

Residues 1-120 (MSNPGTRRNG…TGYQRLDLCK (120 aa)) enclose the C2 domain. At Ser200 the chain carries Phosphoserine. Residues 216–237 (EVRGPLQTPQNRPHGHQSPELP) form a disordered region. 2 WW domains span residues 234-267 (PELP…DPRI) and 280-313 (GPLP…DPRL). Residues Lys355 and Lys357 each participate in a glycyl lysine isopeptide (Lys-Gly) (interchain with G-Cter in ubiquitin) cross-link. The HECT domain maps to 394–731 (RPKDLKKRLM…VEETCGFAVE (338 aa)). Residue Cys699 is the Glycyl thioester intermediate of the active site.

In terms of assembly, interacts with TRAF4. Interacts (via HECT domain) with FBXL15 (via LRR repeats). Interacts with SMAD7 and TGFBR1; SMAD7 recruits SMURF1 to TGFBR1 and regulates TGF-beta receptor degradation. Interacts with MAVS; the interaction is mediated by NDFIP1. Auto-ubiquitinated in presence of NDFIP1. Ubiquitinated by the SCF(FBXL15) complex at Lys-355 and Lys-357, leading to its degradation by the proteasome. Lys-357 is the primary ubiquitination site.

Its subcellular location is the cytoplasm. The protein resides in the cell membrane. The catalysed reaction is S-ubiquitinyl-[E2 ubiquitin-conjugating enzyme]-L-cysteine + [acceptor protein]-L-lysine = [E2 ubiquitin-conjugating enzyme]-L-cysteine + N(6)-ubiquitinyl-[acceptor protein]-L-lysine.. It functions in the pathway protein modification; protein ubiquitination. Functionally, E3 ubiquitin-protein ligase that acts as a negative regulator of BMP signaling pathway. Mediates ubiquitination and degradation of SMAD1 and SMAD5, 2 receptor-regulated SMADs specific for the BMP pathway. Promotes ubiquitination and subsequent proteasomal degradation of TRAF family members and RHOA. Promotes ubiquitination and subsequent proteasomal degradation of MAVS. Acts as an antagonist of TGF-beta signaling by ubiquitinating TGFBR1 and targeting it for degradation. Plays a role in dendrite formation by melanocytes. This is E3 ubiquitin-protein ligase SMURF1 (Smurf1) from Mus musculus (Mouse).